Reading from the N-terminus, the 52-residue chain is Conotoxin Ac4.3a (52 aa).

Residues 1 to 11 (SDFRNAAVHER) constitute a propeptide that is removed on maturation. Gln12 carries the pyrrolidone carboxylic acid modification. Glu14 is modified (4-carboxyglutamate). O-linked (HexNAc...) threonine glycans are attached at residues Thr18 and Thr20. Residues Pro28, Pro33, and Pro47 each carry the 4-hydroxyproline modification. Pro47 carries the proline amide modification. A propeptide spanning residues 48–52 (GRRND) is cleaved from the precursor.

Belongs to the conotoxin A superfamily. Post-translationally, contains 3 disulfide bonds. Expressed by the venom duct.

The protein resides in the secreted. Its function is as follows. Probable neurotoxin with ion channel inhibitor activity. The polypeptide is Conotoxin Ac4.3a (Conus achatinus (Little frog cone)).